A 62-amino-acid chain; its full sequence is MEQRKCYFCGKMLEPGTGKLYVKKDGSTYFMCSSKCMSNFALGRLPRRTEWTEKGKIQLKKA.

The Zn(2+) site is built by Cys6, Cys9, Cys32, and Cys36. The C4-type zinc-finger motif lies at 6–36 (CYFCGKMLEPGTGKLYVKKDGSTYFMCSSKC).

It belongs to the eukaryotic ribosomal protein eL24 family. In terms of assembly, part of the 50S ribosomal subunit. Forms a cluster with proteins L3 and L14. Zn(2+) is required as a cofactor.

Functionally, binds to the 23S rRNA. The chain is Large ribosomal subunit protein eL24 from Methanosarcina acetivorans (strain ATCC 35395 / DSM 2834 / JCM 12185 / C2A).